We begin with the raw amino-acid sequence, 200 residues long: MELQVVGATALSVSETTFGREFNEALIHQVVVAYAAGARQGTRAQKTRAEVSGSGKKPWRQKGTGRARSGDIKSPIWRSGGVTFAAKPQDHSQKVNKKMYRGAIKSILSELVRQDRLVVVDKFEIDAPKTKVLVQKLKDMALTDALIITASLDENLFLAARNLYKVDVRDVQGIDPVSLIAFDKVVITVDAVKQIEEMLA.

The segment at 43 to 70 (RAQKTRAEVSGSGKKPWRQKGTGRARSG) is disordered.

Belongs to the universal ribosomal protein uL4 family. In terms of assembly, part of the 50S ribosomal subunit.

In terms of biological role, one of the primary rRNA binding proteins, this protein initially binds near the 5'-end of the 23S rRNA. It is important during the early stages of 50S assembly. It makes multiple contacts with different domains of the 23S rRNA in the assembled 50S subunit and ribosome. Its function is as follows. Forms part of the polypeptide exit tunnel. The sequence is that of Large ribosomal subunit protein uL4 from Glaesserella parasuis serovar 5 (strain SH0165) (Haemophilus parasuis).